The primary structure comprises 313 residues: MFLPSPNNLSGLNQNILEELLRDKRSPNTRRTYAKALKDFFLTMAGEEPSPDVIAWFLSLDHFQAIAMVLRYRAELLAKDLKPATINVRLAAIKSLVNYARRVGKCQYTLEDVEGLKAETYRDTTGVSPTSFKQITDHITPDSLKGKRDLAIMRLLWDNALRRAEVCGLNVGDYQPTERQLLIKGKGKLGKQAITLSAKGMALINQWLTAIGPRPKNEPLFCTLDRATFGHRLSGNAIYNLVRTSAESAGIHKVMSPHRVRHSAITAALEATNGDTRKVQKLSRHSNLNTLMIYDDNRHQHQAQITDILADLL.

In terms of domain architecture, Core-binding (CB) spans 7-101 (NNLSGLNQNI…AIKSLVNYAR (95 aa)). Positions 122-307 (RDTTGVSPTS…RHQHQAQITD (186 aa)) constitute a Tyr recombinase domain. Residues R162, K188, H258, R261, and H285 contribute to the active site. Y294 acts as the O-(3'-phospho-DNA)-tyrosine intermediate in catalysis.

This sequence belongs to the 'phage' integrase family.

The protein localises to the cytoplasm. In terms of biological role, site-specific tyrosine recombinase, which acts by catalyzing the cutting and rejoining of the recombining DNA molecules. The protein is Tyrosine recombinase slr0733 of Synechocystis sp. (strain ATCC 27184 / PCC 6803 / Kazusa).